Reading from the N-terminus, the 634-residue chain is Probable LRR receptor-like serine/threonine-protein kinase At2g23950 (634 aa).

The N-terminal stretch at 1–27 (MVVMKLITMKIFSVLLLLCFFVTCSLS) is a signal peptide. Residues 28–236 (SEPRNPEVEA…SSGRRTNILA (209 aa)) are Extracellular-facing. Asparagine 96 and asparagine 109 each carry an N-linked (GlcNAc...) asparagine glycan. LRR repeat units lie at residues 99–121 (NLRQVSLQNNNISGKIPPEICSL), 123–145 (KLQTLDLSNNRFSGEIPGSVNQL), 147–167 (NLQYLRLNNNSLSGPFPASLS), and 171–193 (HLSFLDLSYNNLRGPVPKFPART). An N-linked (GlcNAc...) asparagine glycan is attached at asparagine 155. A helical membrane pass occupies residues 237-257 (VALGVSLGFAVSVILSLGFIW). The Cytoplasmic portion of the chain corresponds to 258 to 634 (YRKKQRRLTM…SFAMELSGPR (377 aa)). Threonine 296 is subject to Phosphothreonine. A Protein kinase domain is found at 299–554 (FSSKSILGAG…QVALLCTQFL (256 aa)). 305 to 313 (LGAGGFGNV) provides a ligand contact to ATP. A Phosphothreonine modification is found at threonine 322. Lysine 327 lines the ATP pocket. 2 positions are modified to phosphoserine: serine 380 and serine 383. Position 395 is a phosphothreonine (threonine 395). Aspartate 422 (proton acceptor) is an active-site residue. Residues threonine 455, threonine 456, and threonine 461 each carry the phosphothreonine modification. Tyrosine 469 bears the Phosphotyrosine mark. At serine 471 the chain carries Phosphoserine. Residue threonine 472 is modified to Phosphothreonine. Phosphoserine is present on serine 476. Threonine 551 bears the Phosphothreonine mark.

It belongs to the protein kinase superfamily. Ser/Thr protein kinase family.

The protein localises to the membrane. It carries out the reaction L-seryl-[protein] + ATP = O-phospho-L-seryl-[protein] + ADP + H(+). The catalysed reaction is L-threonyl-[protein] + ATP = O-phospho-L-threonyl-[protein] + ADP + H(+). This Arabidopsis thaliana (Mouse-ear cress) protein is Probable LRR receptor-like serine/threonine-protein kinase At2g23950.